The following is a 239-amino-acid chain: Purine nucleoside phosphorylase DeoD-type (239 aa).

An a purine D-ribonucleoside-binding site is contributed by His5. Phosphate contacts are provided by residues Gly21, Arg25, Arg44, and Arg88–Ser91. Residues Glu180–Glu182 and Ser204–Asp205 contribute to the a purine D-ribonucleoside site. The active-site Proton donor is Asp205.

Belongs to the PNP/UDP phosphorylase family. As to quaternary structure, homohexamer; trimer of homodimers.

It catalyses the reaction a purine D-ribonucleoside + phosphate = a purine nucleobase + alpha-D-ribose 1-phosphate. The enzyme catalyses a purine 2'-deoxy-D-ribonucleoside + phosphate = a purine nucleobase + 2-deoxy-alpha-D-ribose 1-phosphate. Catalyzes the reversible phosphorolytic breakdown of the N-glycosidic bond in the beta-(deoxy)ribonucleoside molecules, with the formation of the corresponding free purine bases and pentose-1-phosphate. The protein is Purine nucleoside phosphorylase DeoD-type of Salmonella agona (strain SL483).